A 433-amino-acid chain; its full sequence is MSIDIDWERATSGPDGELLAERIRSFIHDKFQQIVLPRFIRSVQVTSFNFGTIPPELEIRDLSDPFPDFFEDDDENFSDSSEERSPTREPVDRYGNRVDSWQANSPGGPGGQMYGRVGFNQPLRMPEWEEHTGISPLRGPMNFGDINPYLFPRSGTPGIPGGTSNLGYYMPLSGLSNSQTPLGAVARGNPFSGGWPDAHGARPSRRRSEAEPDSAQSRPSTANTGNTLPSRDSMSVSDPHHCHASQGMSNNQGQVLEPNIPPTSPNHPLDDTPPRRMREQKAEDFQVFCRTKYAGNISLSLTAEILLDYPMPSFVGLPLKLNITGLTFDAVAVIAYIRRRIHFCFLSPDDADTLMGPETAAGSGGGDTLEPNSPRRKHSSLLREIRVESEIGRKENGKQALKNVGKLEKFVLEQVRRIFEEEFVYPSFWTFLI.

The SMP-LTD domain occupies 1-433 (MSIDIDWERA…VYPSFWTFLI (433 aa)). Disordered stretches follow at residues 62 to 113 (LSDP…GGQM), 180 to 279 (TPLG…RMRE), and 356 to 376 (GPET…SPRR). The segment covering 81 to 96 (SEERSPTREPVDRYGN) has biased composition (basic and acidic residues). The segment covering 214 to 236 (SAQSRPSTANTGNTLPSRDSMSV) has biased composition (polar residues). Basic and acidic residues predominate over residues 268 to 279 (PLDDTPPRRMRE).

This sequence belongs to the MDM12 family. In terms of assembly, component of the ER-mitochondria encounter structure (ERMES) or MDM complex, composed of MMM1, MDM10, MDM12 and MDM34. An MMM1 homodimer associates with one molecule of MDM12 on each side in a pairwise head-to-tail manner, and the SMP-LTD domains of MMM1 and MDM12 generate a continuous hydrophobic tunnel for phospholipid trafficking.

The protein localises to the mitochondrion outer membrane. The protein resides in the endoplasmic reticulum membrane. Functionally, component of the ERMES/MDM complex, which serves as a molecular tether to connect the endoplasmic reticulum (ER) and mitochondria. Components of this complex are involved in the control of mitochondrial shape and protein biogenesis, and function in nonvesicular lipid trafficking between the ER and mitochondria. MDM12 is required for the interaction of the ER-resident membrane protein MMM1 and the outer mitochondrial membrane-resident beta-barrel protein MDM10. The MDM12-MMM1 subcomplex functions in the major beta-barrel assembly pathway that is responsible for biogenesis of all mitochondrial outer membrane beta-barrel proteins, and acts in a late step after the SAM complex. The MDM10-MDM12-MMM1 subcomplex further acts in the TOM40-specific pathway after the action of the MDM12-MMM1 complex. Essential for establishing and maintaining the structure of mitochondria and maintenance of mtDNA nucleoids. This is Mitochondrial distribution and morphology protein 12 from Ajellomyces capsulatus (strain NAm1 / WU24) (Darling's disease fungus).